A 102-amino-acid polypeptide reads, in one-letter code: NADH-quinone oxidoreductase subunit K (102 aa).

Helical transmembrane passes span 4–24 (IPME…LVGL), 30–50 (MLFV…AFIV), and 62–82 (VMFL…LALL).

It belongs to the complex I subunit 4L family. In terms of assembly, NDH-1 is composed of 14 different subunits. Subunits NuoA, H, J, K, L, M, N constitute the membrane sector of the complex.

It is found in the cell inner membrane. It carries out the reaction a quinone + NADH + 5 H(+)(in) = a quinol + NAD(+) + 4 H(+)(out). NDH-1 shuttles electrons from NADH, via FMN and iron-sulfur (Fe-S) centers, to quinones in the respiratory chain. The immediate electron acceptor for the enzyme in this species is believed to be ubiquinone. Couples the redox reaction to proton translocation (for every two electrons transferred, four hydrogen ions are translocated across the cytoplasmic membrane), and thus conserves the redox energy in a proton gradient. The protein is NADH-quinone oxidoreductase subunit K of Chromohalobacter salexigens (strain ATCC BAA-138 / DSM 3043 / CIP 106854 / NCIMB 13768 / 1H11).